A 342-amino-acid polypeptide reads, in one-letter code: Peptide chain release factor 1 (342 aa).

Gln211 is modified (N5-methylglutamine). The interval 262-282 is disordered; the sequence is KEREISQKRKSQIGTGERSEK.

This sequence belongs to the prokaryotic/mitochondrial release factor family. Methylated by PrmC. Methylation increases the termination efficiency of RF1.

The protein resides in the cytoplasm. Functionally, peptide chain release factor 1 directs the termination of translation in response to the peptide chain termination codons UAG and UAA. The chain is Peptide chain release factor 1 (prfA) from Thermotoga maritima (strain ATCC 43589 / DSM 3109 / JCM 10099 / NBRC 100826 / MSB8).